The primary structure comprises 510 residues: Probable cytosol aminopeptidase (510 aa).

The Mn(2+) site is built by lysine 282 and aspartate 287. Residue lysine 294 is part of the active site. Residues aspartate 305, aspartate 364, and glutamate 366 each contribute to the Mn(2+) site. Arginine 368 is a catalytic residue.

Belongs to the peptidase M17 family. The cofactor is Mn(2+).

The protein localises to the cytoplasm. It carries out the reaction Release of an N-terminal amino acid, Xaa-|-Yaa-, in which Xaa is preferably Leu, but may be other amino acids including Pro although not Arg or Lys, and Yaa may be Pro. Amino acid amides and methyl esters are also readily hydrolyzed, but rates on arylamides are exceedingly low.. The enzyme catalyses Release of an N-terminal amino acid, preferentially leucine, but not glutamic or aspartic acids.. Presumably involved in the processing and regular turnover of intracellular proteins. Catalyzes the removal of unsubstituted N-terminal amino acids from various peptides. The chain is Probable cytosol aminopeptidase from Cupriavidus pinatubonensis (strain JMP 134 / LMG 1197) (Cupriavidus necator (strain JMP 134)).